Reading from the N-terminus, the 383-residue chain is MTHQLRKSHPLLKLVNHSLIDLPTPSNISTWWNFGSLLGLTLMIQILTGVFLMMHFSPSDTTAFSSVAYTSREVWFGWLIRSFHTNGASIFFMFIFLHIGRGLYYASYLHENTWNVGVIMLFLLMATAFMGYVLPWGQMSFWGAAVITNLLSAIPYIGDTIVPWIWGGPSVNNATLTRFTALHFLLPFIILALLITHLIFLHERGSFNPAGLSKNTDKIPFHPYYTMKDVLGAVLAASMLLTLALYLPALLGDPENFTPANPMATPSHIKPEWYFLFAYAILRSIPNKLGGVLAMFSSIFILLLIPFLHTTTQQPMSLRPLSQLLFWTLILNFLALTWIGGKPVNSPYILLGQITSLLYFITILILMPLLGALENKTTKPPFI.

Transmembrane regions (helical) follow at residues 34 to 54 (FGSL…FLMM), 78 to 99 (WLIR…FLHI), 114 to 134 (WNVG…GYVL), and 179 to 199 (FTAL…THLI). Heme b contacts are provided by His-84 and His-98. His-183 and His-197 together coordinate heme b. Position 202 (His-202) interacts with a ubiquinone. Transmembrane regions (helical) follow at residues 227-247 (MKDV…ALYL), 289-309 (LGGV…PFLH), 321-341 (LSQL…WIGG), and 348-368 (YILL…ILMP).

Belongs to the cytochrome b family. In terms of assembly, the cytochrome bc1 complex contains 3 respiratory subunits (MT-CYB, CYC1 and UQCRFS1), 2 core proteins (UQCRC1 and UQCRC2) and probably 6 low-molecular weight proteins. Heme b is required as a cofactor.

It localises to the mitochondrion inner membrane. Its function is as follows. Component of the ubiquinol-cytochrome c reductase complex (complex III or cytochrome b-c1 complex) that is part of the mitochondrial respiratory chain. The b-c1 complex mediates electron transfer from ubiquinol to cytochrome c. Contributes to the generation of a proton gradient across the mitochondrial membrane that is then used for ATP synthesis. The chain is Cytochrome b (MT-CYB) from Caiman crocodilus (Spectacled caiman).